A 551-amino-acid chain; its full sequence is Eukaryotic translation initiation factor 3 subunit D-2 (551 aa).

The tract at residues 108–152 (RTRGRTGRGTPNIASLGGSTAGGATASSTKYGKGRHTRNTQNVGR) is disordered. Low complexity predominate over residues 115–136 (RGTPNIASLGGSTAGGATASST). The tract at residues 290–304 (QFDLLTVNETSVEPP) is RNA gate. The disordered stretch occupies residues 527–551 (PENAFDSDRDEEEESSEPLSNSNDN).

Belongs to the eIF-3 subunit D family. Component of the eukaryotic translation initiation factor 3 (eIF-3) complex. The eIF-3 complex interacts with pix.

It is found in the cytoplasm. Functionally, mRNA cap-binding component of the eukaryotic translation initiation factor 3 (eIF-3) complex, which is involved in protein synthesis of a specialized repertoire of mRNAs and, together with other initiation factors, stimulates binding of mRNA and methionyl-tRNAi to the 40S ribosome. The eIF-3 complex specifically targets and initiates translation of a subset of mRNAs involved in cell proliferation. In the eIF-3 complex, eif3d specifically recognizes and binds the 7-methylguanosine cap of a subset of mRNAs. The chain is Eukaryotic translation initiation factor 3 subunit D-2 from Drosophila simulans (Fruit fly).